The following is a 409-amino-acid chain: Argininosuccinate synthase (409 aa).

ATP contacts are provided by residues 11 to 19 (AYSGGLDTS) and Ala-38. Positions 91 and 96 each coordinate L-citrulline. Gly-121 lines the ATP pocket. The L-aspartate site is built by Thr-123, Asn-127, and Asp-128. Asn-127 is an L-citrulline binding site. Residues Arg-131, Ser-182, Ser-191, Glu-267, and Tyr-279 each contribute to the L-citrulline site.

The protein belongs to the argininosuccinate synthase family. Type 1 subfamily. In terms of assembly, homotetramer.

Its subcellular location is the cytoplasm. The enzyme catalyses L-citrulline + L-aspartate + ATP = 2-(N(omega)-L-arginino)succinate + AMP + diphosphate + H(+). Its pathway is amino-acid biosynthesis; L-arginine biosynthesis; L-arginine from L-ornithine and carbamoyl phosphate: step 2/3. The sequence is that of Argininosuccinate synthase from Xanthobacter autotrophicus (strain ATCC BAA-1158 / Py2).